A 172-amino-acid polypeptide reads, in one-letter code: 3-phenylpropionate/cinnamic acid dioxygenase subunit beta (172 aa).

It belongs to the bacterial ring-hydroxylating dioxygenase beta subunit family. As to quaternary structure, this dioxygenase system consists of four proteins: the two subunits of the hydroxylase component (HcaE and HcaF), a ferredoxin (HcaC) and a ferredoxin reductase (HcaD).

The catalysed reaction is 3-phenylpropanoate + NADH + O2 + H(+) = 3-(cis-5,6-dihydroxycyclohexa-1,3-dien-1-yl)propanoate + NAD(+). It carries out the reaction (E)-cinnamate + NADH + O2 + H(+) = (2E)-3-(cis-5,6-dihydroxycyclohexa-1,3-dien-1-yl)prop-2-enoate + NAD(+). It participates in aromatic compound metabolism; 3-phenylpropanoate degradation. Functionally, part of the multicomponent 3-phenylpropionate dioxygenase. Converts 3-phenylpropionic acid (PP) and cinnamic acid (CI) into 3-phenylpropionate-dihydrodiol (PP-dihydrodiol) and cinnamic acid-dihydrodiol (CI-dihydrodiol), respectively. This is 3-phenylpropionate/cinnamic acid dioxygenase subunit beta from Escherichia coli O17:K52:H18 (strain UMN026 / ExPEC).